A 2090-amino-acid polypeptide reads, in one-letter code: Ninein (2090 aa).

EF-hand domains lie at 8–43 and 42–77; these read QHEA…LSLE and LEEV…ILSR. Ser152 is modified (phosphoserine). EF-hand domains are found at residues 182–217 and 219–252; these read WIEE…YGLQ and VDGE…NGKS. GTP is bound at residue 245-252; the sequence is GLFKNGKS. At Ser269 the chain carries Phosphoserine. 300–304 serves as a coordination point for GTP; the sequence is DGMGH. In terms of domain architecture, EF-hand 5 spans 317 to 352; sequence EGIENSQEILKALDFSLDGNINLTELTLALENELLV. The stretch at 357–570 forms a coiled coil; it reads IHQAALASFK…YRAQGRVLRL (214 aa). 420–423 provides a ligand contact to GTP; the sequence is RKLD. The disordered stretch occupies residues 574-595; the sequence is NSPSEEVEANSGGIEPEHGLGS. Coiled-coil stretches lie at residues 625-1027, 1068-1099, 1181-1341, and 1441-1816; these read LRLE…QATS, LSLQ…QKLE, SELE…SVVQ, and QDKH…AGGK. Residues 802-1505 are important for interaction with CEP170; it reads KMETECNRRT…HDLQITCSEM (704 aa). Residues 1152-1190 are disordered; it reads VRDLGSTGTSSVQRQEVKIEESEASVEGFSELENSEETR. 2 positions are modified to phosphoserine: Ser1550 and Ser1837. Coiled coils occupy residues 1854–1885 and 1922–2067; these read QENE…SNLL and ANRK…QVSL.

Homooligomer. Interacts with GSK3B/GSK3-beta via its C-terminal domain. Interacts with C14ORF166, such interaction may prevent its phosphorylation by GSK3B. Interacts with AUNIP (via N-terminus). Identified in a complex with AUNIP and AURKA. Interacts with CCDC120. Interacts (via C-terminus) with CEP250. Interacts with CEP170. Interacts with the gamma-tubulin ring complex component TUBGCP3. Interacts with gamma-tubulin. Isoform 6 does not interact with CEP170 or CEP250. Phosphorylated by AURKA/Aurora kinase A and PKA kinases but not CK2 or AURKB/ Aurora kinase B. Ubiquitous. Highly expressed in heart and skeletal muscle. Isoform 1 is more expressed than isoform 5.

It is found in the cytoplasm. Its subcellular location is the cytoskeleton. The protein localises to the microtubule organizing center. The protein resides in the centrosome. It localises to the centriole. Functionally, centrosomal protein required in the positioning and anchorage of the microtubule minus-end in epithelial cells. May also act as a centrosome maturation factor. May play a role in microtubule nucleation, by recruiting the gamma-tubulin ring complex to the centrosome. Overexpression does not perturb nucleation or elongation of microtubules but suppresses release of microtubules. Required for centriole organization and microtubule anchoring at the mother centriole. In Homo sapiens (Human), this protein is Ninein (NIN).